We begin with the raw amino-acid sequence, 296 residues long: Adrenocorticotropic hormone receptor (296 aa).

Residues 1–23 (MKHIINSYEHTNDTARNNSDCPD) are Extracellular-facing. 2 N-linked (GlcNAc...) asparagine glycosylation sites follow: N12 and N17. Cystine bridges form between C21/C253 and C245/C251. Residues 24–49 (VVLPEEIFFTISVIGILENLIVLLAV) form a helical membrane-spanning segment. At 50-58 (IKNKNLQSP) the chain is on the cytoplasmic side. The chain crosses the membrane as a helical span at residues 59 to 79 (MYFFICSLAISDMLGSLYKIL). Residues 80 to 104 (ENILIMFRNMGYLKPRGSFESTADD) are Extracellular-facing. A helical transmembrane segment spans residues 105–126 (IIDCMFILSLLGSIFSLSVIAA). Over 127–147 (DRYITIFHALQYHSIVTMRRT) the chain is Cytoplasmic. A helical membrane pass occupies residues 148-168 (IITLTIIWMFCTGSGITMVIF). The Extracellular portion of the chain corresponds to 169 to 180 (SHHIPTVLTFTS). The helical transmembrane segment at 181–199 (LFPLMLVFILCLYIHMFLL) threads the bilayer. At 200–217 (ARSHARKISTLPRTNMKG) the chain is on the cytoplasmic side. Residues 218–244 (AMTLTILLGVFIFCWAPFVLHVLLMTF) form a helical membrane-spanning segment. The Extracellular portion of the chain corresponds to 245 to 256 (CPNNPYCVCYMS). The helical transmembrane segment at 257–278 (LFQVNGMLIMCNAVIDPFIYAF) threads the bilayer. The Cytoplasmic portion of the chain corresponds to 279-296 (RSPELRDAFKRMLFCNRY). C293 carries the S-palmitoyl cysteine lipid modification.

The protein belongs to the G-protein coupled receptor 1 family. Homodimer. Interacts with corticotropin (ACTH). Interacts with MRAP; this interaction targets MC2R to the plasma membrane. Interacts with MRAP2; competing with MRAP for binding to MC2R and impairing the binding of corticotropin (ACTH). Ubiquitinated by MGRN1 that may be involved in post-endocytic trafficking and/or degradation of internalized receptor.

The protein resides in the cell membrane. In terms of biological role, hormone receptor primarily expressed in adrenal cortex that plays a key role in regulating adrenocortical function. Upon corticotropin (ACTH) binding, facilitates the release of adrenal glucocorticoids, including cortisol and corticosterone. In addition, MC2R is required for fetal and neonatal adrenal gland development. Mechanistically, activates adenylate cyclase (cAMP), the MAPK cascade as well as the cAMP-dependent protein kinase A pathway leading to steroidogenic factor 1/NR5A1-mediated transcriptional activation. The protein is Adrenocorticotropic hormone receptor (Mc2r) of Mus musculus (Mouse).